The following is a 177-amino-acid chain: Large ribosomal subunit protein uL6 (177 aa).

Belongs to the universal ribosomal protein uL6 family. As to quaternary structure, part of the 50S ribosomal subunit.

Functionally, this protein binds to the 23S rRNA, and is important in its secondary structure. It is located near the subunit interface in the base of the L7/L12 stalk, and near the tRNA binding site of the peptidyltransferase center. This Bordetella petrii (strain ATCC BAA-461 / DSM 12804 / CCUG 43448) protein is Large ribosomal subunit protein uL6.